We begin with the raw amino-acid sequence, 347 residues long: Phosphoribosylformylglycinamidine cyclo-ligase (347 aa).

This sequence belongs to the AIR synthase family.

The protein localises to the cytoplasm. It carries out the reaction 2-formamido-N(1)-(5-O-phospho-beta-D-ribosyl)acetamidine + ATP = 5-amino-1-(5-phospho-beta-D-ribosyl)imidazole + ADP + phosphate + H(+). The protein operates within purine metabolism; IMP biosynthesis via de novo pathway; 5-amino-1-(5-phospho-D-ribosyl)imidazole from N(2)-formyl-N(1)-(5-phospho-D-ribosyl)glycinamide: step 2/2. This is Phosphoribosylformylglycinamidine cyclo-ligase from Alkalilimnicola ehrlichii (strain ATCC BAA-1101 / DSM 17681 / MLHE-1).